A 341-amino-acid chain; its full sequence is Adenosine deaminase (341 aa).

Residues His15 and His17 each coordinate Zn(2+). Substrate is bound by residues His17, Asp19, and Gly172. Zn(2+) is bound at residue His199. Catalysis depends on Glu202, which acts as the Proton donor. A Zn(2+)-binding site is contributed by Asp279.

Belongs to the metallo-dependent hydrolases superfamily. Adenosine and AMP deaminases family. Adenosine deaminase subfamily. The cofactor is Zn(2+).

It catalyses the reaction adenosine + H2O + H(+) = inosine + NH4(+). It carries out the reaction 2'-deoxyadenosine + H2O + H(+) = 2'-deoxyinosine + NH4(+). In terms of biological role, catalyzes the hydrolytic deamination of adenosine and 2-deoxyadenosine. This chain is Adenosine deaminase, found in Streptococcus equi subsp. zooepidemicus (strain MGCS10565).